A 714-amino-acid polypeptide reads, in one-letter code: MVLTDSEIEFIRKELGRDPNPLEYGMLDVMFSEHCSYKSSRPVLGFFPTEGEGVIIGPGDDAGVVEVTDELAMAIGIESHNHPSAIEPYGGAGTGIGGILRDIISMGAMPIALLDSLRFGYLEDQKSRYLFEHVVKGISDYGNRVGVPTVAGEVEFDDNFQLNPLVNVMCAGLVRKDEIKRGIAPRPGDVFLLMGGRTGRDGIHGVTFASEELTSSSELEDRPAVQVGDPFTKKMVMEASFEIMEKIEVSGVKDLGGGGLTCCISELVAKCDNGARVNLEAIPLREEGMTPYEIMLSESQERMIFVLSPDRVDEAMEICRKYELPAAVIGEVTDTGRMIVESEGKVIADLPAKLLADPPVIEREAKKPDLPEGQVEVQHPLLTEALLKLLSSPNIASKRWVYRQYDHEVQIRTVVKPGDDAAVLRVDEKTGVALTVDCNSIHTKLDPYGGGAASVGEAIRNVVSMGAWPLCIVDCLNFGNPEKPEVFWQFRECVRGMADMAETFGTPVISGNVSFYNETEGVTVNPSPVVGVAGRLPLDSIKTMDFKAEGEKIIVIGDTKPELGASEYLRTVHGIVDGKPPETDLRAEFDAANSVRRIIERFGDKVTAIHDCSAGGIGVAVAEMAIKSGIGATIDTGKIPGSFSNIHEALFSESNGRYILTVTGSVEEIIQELEVPCAVIGTTGGGALKFDDVALDVSELYDAYHGVIEAYMST.

His34 is a catalytic residue. Tyr37 provides a ligand contact to ATP. Mg(2+) is bound at residue Glu78. Residues 79–82 (SHNH) and Arg101 each bind substrate. His80 acts as the Proton acceptor in catalysis. Asp102 contacts Mg(2+). Residue Gln226 coordinates substrate. Asp254 is a Mg(2+) binding site. 298–300 (ESQ) provides a ligand contact to substrate. Residues Asp474 and Gly511 each coordinate ATP. A Mg(2+)-binding site is contributed by Asn512. Residue Ser514 participates in substrate binding.

Belongs to the FGAMS family. Monomer. Part of the FGAM synthase complex composed of 1 PurL, 1 PurQ and 2 PurS subunits.

The protein localises to the cytoplasm. It catalyses the reaction N(2)-formyl-N(1)-(5-phospho-beta-D-ribosyl)glycinamide + L-glutamine + ATP + H2O = 2-formamido-N(1)-(5-O-phospho-beta-D-ribosyl)acetamidine + L-glutamate + ADP + phosphate + H(+). The protein operates within purine metabolism; IMP biosynthesis via de novo pathway; 5-amino-1-(5-phospho-D-ribosyl)imidazole from N(2)-formyl-N(1)-(5-phospho-D-ribosyl)glycinamide: step 1/2. Its function is as follows. Part of the phosphoribosylformylglycinamidine synthase complex involved in the purines biosynthetic pathway. Catalyzes the ATP-dependent conversion of formylglycinamide ribonucleotide (FGAR) and glutamine to yield formylglycinamidine ribonucleotide (FGAM) and glutamate. The FGAM synthase complex is composed of three subunits. PurQ produces an ammonia molecule by converting glutamine to glutamate. PurL transfers the ammonia molecule to FGAR to form FGAM in an ATP-dependent manner. PurS interacts with PurQ and PurL and is thought to assist in the transfer of the ammonia molecule from PurQ to PurL. The polypeptide is Phosphoribosylformylglycinamidine synthase subunit PurL (Methanothermobacter marburgensis (strain ATCC BAA-927 / DSM 2133 / JCM 14651 / NBRC 100331 / OCM 82 / Marburg) (Methanobacterium thermoautotrophicum)).